We begin with the raw amino-acid sequence, 484 residues long: Glutamate--tRNA ligase (484 aa).

The 'HIGH' region signature appears at 10-20 (PSPTGYLHVGG). Positions 252-256 (KLSKR) match the 'KMSKS' region motif. Lys-255 is a binding site for ATP.

Belongs to the class-I aminoacyl-tRNA synthetase family. Glutamate--tRNA ligase type 1 subfamily. Monomer.

It localises to the cytoplasm. The catalysed reaction is tRNA(Glu) + L-glutamate + ATP = L-glutamyl-tRNA(Glu) + AMP + diphosphate. Functionally, catalyzes the attachment of glutamate to tRNA(Glu) in a two-step reaction: glutamate is first activated by ATP to form Glu-AMP and then transferred to the acceptor end of tRNA(Glu). The protein is Glutamate--tRNA ligase of Mycoplasma genitalium (strain ATCC 33530 / DSM 19775 / NCTC 10195 / G37) (Mycoplasmoides genitalium).